The following is a 460-amino-acid chain: 3-isopropylmalate dehydratase large subunit (460 aa).

[4Fe-4S] cluster-binding residues include Cys-338, Cys-398, and Cys-401.

This sequence belongs to the aconitase/IPM isomerase family. LeuC type 1 subfamily. In terms of assembly, heterodimer of LeuC and LeuD. [4Fe-4S] cluster serves as cofactor.

The catalysed reaction is (2R,3S)-3-isopropylmalate = (2S)-2-isopropylmalate. The protein operates within amino-acid biosynthesis; L-leucine biosynthesis; L-leucine from 3-methyl-2-oxobutanoate: step 2/4. Catalyzes the isomerization between 2-isopropylmalate and 3-isopropylmalate, via the formation of 2-isopropylmaleate. The chain is 3-isopropylmalate dehydratase large subunit from Streptococcus thermophilus (strain ATCC BAA-491 / LMD-9).